The sequence spans 441 residues: Cysteine desulfurase, mitosomal (441 aa).

Pyridoxal 5'-phosphate-binding positions include Ala-107 to Thr-108, Asn-189, Gln-217, and Ser-237 to His-239. The residue at position 240 (Lys-240) is an N6-(pyridoxal phosphate)lysine. A pyridoxal 5'-phosphate-binding site is contributed by Thr-277. The Cysteine persulfide intermediate role is filled by Cys-367. Cys-367 lines the [2Fe-2S] cluster pocket.

It belongs to the class-V pyridoxal-phosphate-dependent aminotransferase family. NifS/IscS subfamily. As to quaternary structure, interacts with ISD11. Pyridoxal 5'-phosphate serves as cofactor.

The protein localises to the mitosome. It catalyses the reaction (sulfur carrier)-H + L-cysteine = (sulfur carrier)-SH + L-alanine. Its function is as follows. Catalyzes the removal of elemental sulfur from cysteine to produce alanine. It supplies the inorganic sulfur for iron-sulfur (Fe-S) clusters in mitosomes. The sequence is that of Cysteine desulfurase, mitosomal from Trachipleistophora hominis (Microsporidian parasite).